Consider the following 207-residue polypeptide: Thiamine-phosphate synthase (207 aa).

4-amino-2-methyl-5-(diphosphooxymethyl)pyrimidine-binding positions include 36–40 (QMRIK) and Asp-68. 2 residues coordinate Mg(2+): Asp-69 and Asp-88. Ser-106 serves as a coordination point for 4-amino-2-methyl-5-(diphosphooxymethyl)pyrimidine. 132-134 (TKT) provides a ligand contact to 2-[(2R,5Z)-2-carboxy-4-methylthiazol-5(2H)-ylidene]ethyl phosphate. Lys-135 contributes to the 4-amino-2-methyl-5-(diphosphooxymethyl)pyrimidine binding site. Residues Gly-162 and 182–183 (IS) each bind 2-[(2R,5Z)-2-carboxy-4-methylthiazol-5(2H)-ylidene]ethyl phosphate.

This sequence belongs to the thiamine-phosphate synthase family. The cofactor is Mg(2+).

The enzyme catalyses 2-[(2R,5Z)-2-carboxy-4-methylthiazol-5(2H)-ylidene]ethyl phosphate + 4-amino-2-methyl-5-(diphosphooxymethyl)pyrimidine + 2 H(+) = thiamine phosphate + CO2 + diphosphate. It carries out the reaction 2-(2-carboxy-4-methylthiazol-5-yl)ethyl phosphate + 4-amino-2-methyl-5-(diphosphooxymethyl)pyrimidine + 2 H(+) = thiamine phosphate + CO2 + diphosphate. It catalyses the reaction 4-methyl-5-(2-phosphooxyethyl)-thiazole + 4-amino-2-methyl-5-(diphosphooxymethyl)pyrimidine + H(+) = thiamine phosphate + diphosphate. It functions in the pathway cofactor biosynthesis; thiamine diphosphate biosynthesis; thiamine phosphate from 4-amino-2-methyl-5-diphosphomethylpyrimidine and 4-methyl-5-(2-phosphoethyl)-thiazole: step 1/1. Its function is as follows. Condenses 4-methyl-5-(beta-hydroxyethyl)thiazole monophosphate (THZ-P) and 2-methyl-4-amino-5-hydroxymethyl pyrimidine pyrophosphate (HMP-PP) to form thiamine monophosphate (TMP). This Pyrococcus furiosus (strain ATCC 43587 / DSM 3638 / JCM 8422 / Vc1) protein is Thiamine-phosphate synthase.